Here is a 525-residue protein sequence, read N- to C-terminus: Glutamate--cysteine ligase (525 aa).

It belongs to the glutamate--cysteine ligase type 1 family. Type 1 subfamily.

The catalysed reaction is L-cysteine + L-glutamate + ATP = gamma-L-glutamyl-L-cysteine + ADP + phosphate + H(+). The protein operates within sulfur metabolism; glutathione biosynthesis; glutathione from L-cysteine and L-glutamate: step 1/2. The protein is Glutamate--cysteine ligase of Pseudomonas putida (strain W619).